We begin with the raw amino-acid sequence, 153 residues long: MSRRKARELALQALFQMDIAGTDPDTAVAQALTRETEPDWAPDRLEEESAEFARRLVRGAWQHREESDRLIAQYARGWRVERMAAVDRAILRMAVYEIVHSEDVPDSVAVAEAVELAKTFSTADSSRFVNGILGSVIRGMKGAAGADEAVSRD.

It belongs to the NusB family.

Involved in transcription antitermination. Required for transcription of ribosomal RNA (rRNA) genes. Binds specifically to the boxA antiterminator sequence of the ribosomal RNA (rrn) operons. The protein is Transcription antitermination protein NusB of Symbiobacterium thermophilum (strain DSM 24528 / JCM 14929 / IAM 14863 / T).